A 473-amino-acid polypeptide reads, in one-letter code: NAC domain-containing protein 68 (473 aa).

One can recognise an NAC domain in the interval 4-154 (GLIGYRFSPT…KYVVCQVKYK (151 aa)). Residues 108-160 (IGIKKTLVYHEGKSPHGVRTPWVMHEYHITCLPHHKRKYVVCQVKYKGEAAEI) mediate DNA binding. Residues 326-380 (DHMPRKPVTGTIDYSSDSGSDAGSISTTSYQGTSSPNISVGSSSRHLSSCSSTDS) form a disordered region. Composition is skewed to low complexity over residues 340-354 (SSDS…STTS) and 364-379 (SVGS…SSTD). Residues 446–468 (FIYLMKMIIGNIISVLLPVKRLI) traverse the membrane as a helical segment.

The protein resides in the membrane. The protein localises to the nucleus. Its function is as follows. Transcription activator activated by proteolytic cleavage through regulated intramembrane proteolysis (RIP) mediated by calpain or its functional homolog. Regulates cytokinin signaling during cell division. The sequence is that of NAC domain-containing protein 68 (NAC68) from Arabidopsis thaliana (Mouse-ear cress).